A 204-amino-acid polypeptide reads, in one-letter code: Probable calcium-binding protein CML46 (204 aa).

EF-hand domains lie at 72 to 106 (LEFQ…LGLS), 132 to 167 (PSLE…LGLK), and 170 to 204 (SNLE…NNFC). Ca(2+) is bound by residues Asp-145, Asn-147, Asp-149, and Asp-156.

In terms of biological role, potential calcium sensor. In Arabidopsis thaliana (Mouse-ear cress), this protein is Probable calcium-binding protein CML46.